Here is a 488-residue protein sequence, read N- to C-terminus: UDP-glycosyltransferase 73B1 (488 aa).

UDP-alpha-D-glucose is bound by residues threonine 297, 356–358 (APQ), 373–381 (HCGWNSLLE), and 395–398 (GAEQ).

This sequence belongs to the UDP-glycosyltransferase family.

In terms of biological role, possesses low quercetin 3-O-glucosyltransferase and 7-O-glucosyltransferase activities in vitro. The chain is UDP-glycosyltransferase 73B1 (UGT73B1) from Arabidopsis thaliana (Mouse-ear cress).